Here is a 343-residue protein sequence, read N- to C-terminus: D-beta-hydroxybutyrate dehydrogenase, mitochondrial (343 aa).

Residues 1-46 (MLAARLSRPLSQLPGKALSVCDRENGTRHTLLFYPASFSPDTRRTY) constitute a mitochondrion transit peptide. 59–83 (LVTGCDSGFGFSLAKHLHSKGFLVF) contacts NAD(+). Lysine 73 is subject to N6-acetyllysine. Lysine 103 is subject to N6-acetyllysine; alternate. Position 103 is an N6-succinyllysine; alternate (lysine 103). Residues lysine 132 and lysine 177 each carry the N6-acetyllysine modification. Serine 195 lines the substrate pocket. The Proton acceptor role is filled by tyrosine 208. Lysine 212 carries the post-translational modification N6-acetyllysine. An O-linked (GlcNAc) serine glycan is attached at serine 219. The residue at position 246 (serine 246) is a Phosphoserine. Lysine 258 carries the N6-acetyllysine modification. At lysine 259 the chain carries N6-acetyllysine; alternate. N6-succinyllysine; alternate is present on lysine 259. At lysine 280 the chain carries N6-acetyllysine.

This sequence belongs to the short-chain dehydrogenases/reductases (SDR) family. As to quaternary structure, homotetramer. As to expression, expressed in liver.

It localises to the mitochondrion inner membrane. The protein resides in the mitochondrion matrix. It carries out the reaction (R)-3-hydroxybutanoate + NAD(+) = acetoacetate + NADH + H(+). With respect to regulation, requires phosphatidylcholine as an allosteric activator for enzymatic activity. This Rattus norvegicus (Rat) protein is D-beta-hydroxybutyrate dehydrogenase, mitochondrial.